The following is a 131-amino-acid chain: Large ribosomal subunit protein bL19 (131 aa).

It belongs to the bacterial ribosomal protein bL19 family.

This protein is located at the 30S-50S ribosomal subunit interface and may play a role in the structure and function of the aminoacyl-tRNA binding site. The sequence is that of Large ribosomal subunit protein bL19 from Anaeromyxobacter dehalogenans (strain 2CP-C).